The chain runs to 921 residues: DNA ligase (921 aa).

Residues 90-94 (DAAYD), 139-140 (SL), and Glu173 each bind NAD(+). Residue Lys175 is the N6-AMP-lysine intermediate of the active site. NAD(+)-binding residues include Arg196, Glu235, Lys360, and Lys384. Zn(2+) is bound by residues Cys481, Cys484, Cys500, and Cys506. The disordered stretch occupies residues 663 to 688 (EAAIESAETQGGAASETTGAPTGAEA). Residues 839 to 921 (SLPQTLAGKT…AQLLETGSID (83 aa)) enclose the BRCT domain.

The protein belongs to the NAD-dependent DNA ligase family. LigA subfamily. Mg(2+) is required as a cofactor. Mn(2+) serves as cofactor.

The enzyme catalyses NAD(+) + (deoxyribonucleotide)n-3'-hydroxyl + 5'-phospho-(deoxyribonucleotide)m = (deoxyribonucleotide)n+m + AMP + beta-nicotinamide D-nucleotide.. In terms of biological role, DNA ligase that catalyzes the formation of phosphodiester linkages between 5'-phosphoryl and 3'-hydroxyl groups in double-stranded DNA using NAD as a coenzyme and as the energy source for the reaction. It is essential for DNA replication and repair of damaged DNA. The polypeptide is DNA ligase (Bifidobacterium longum subsp. infantis (strain ATCC 15697 / DSM 20088 / JCM 1222 / NCTC 11817 / S12)).